We begin with the raw amino-acid sequence, 475 residues long: UDP-N-acetylmuramate--L-alanine ligase (475 aa).

Residue G117–T123 coordinates ATP.

This sequence belongs to the MurCDEF family.

It localises to the cytoplasm. The catalysed reaction is UDP-N-acetyl-alpha-D-muramate + L-alanine + ATP = UDP-N-acetyl-alpha-D-muramoyl-L-alanine + ADP + phosphate + H(+). The protein operates within cell wall biogenesis; peptidoglycan biosynthesis. Cell wall formation. The protein is UDP-N-acetylmuramate--L-alanine ligase of Chlorobaculum tepidum (strain ATCC 49652 / DSM 12025 / NBRC 103806 / TLS) (Chlorobium tepidum).